The following is a 490-amino-acid chain: Bifunctional protein HldE (490 aa).

A ribokinase region spans residues 1-330 (MFDFDDLSQA…RKILPHAYRA (330 aa)). ATP is bound at residue 205 to 208 (NRKE). Aspartate 275 is a catalytic residue. Positions 358–490 (FTNGCFDILH…LVDRARSDQR (133 aa)) are cytidylyltransferase.

It in the N-terminal section; belongs to the carbohydrate kinase PfkB family. The protein in the C-terminal section; belongs to the cytidylyltransferase family. As to quaternary structure, homodimer.

It carries out the reaction D-glycero-beta-D-manno-heptose 7-phosphate + ATP = D-glycero-beta-D-manno-heptose 1,7-bisphosphate + ADP + H(+). It catalyses the reaction D-glycero-beta-D-manno-heptose 1-phosphate + ATP + H(+) = ADP-D-glycero-beta-D-manno-heptose + diphosphate. The protein operates within nucleotide-sugar biosynthesis; ADP-L-glycero-beta-D-manno-heptose biosynthesis; ADP-L-glycero-beta-D-manno-heptose from D-glycero-beta-D-manno-heptose 7-phosphate: step 1/4. It functions in the pathway nucleotide-sugar biosynthesis; ADP-L-glycero-beta-D-manno-heptose biosynthesis; ADP-L-glycero-beta-D-manno-heptose from D-glycero-beta-D-manno-heptose 7-phosphate: step 3/4. Catalyzes the phosphorylation of D-glycero-D-manno-heptose 7-phosphate at the C-1 position to selectively form D-glycero-beta-D-manno-heptose-1,7-bisphosphate. In terms of biological role, catalyzes the ADP transfer from ATP to D-glycero-beta-D-manno-heptose 1-phosphate, yielding ADP-D-glycero-beta-D-manno-heptose. This Bradyrhizobium sp. (strain ORS 278) protein is Bifunctional protein HldE.